The sequence spans 143 residues: Transcriptional regulator MraZ (143 aa).

SpoVT-AbrB domains follow at residues 5-47 (TYTP…PREE) and 76-119 (TDEQ…DAQA).

This sequence belongs to the MraZ family. As to quaternary structure, forms oligomers.

It localises to the cytoplasm. The protein resides in the nucleoid. This is Transcriptional regulator MraZ from Rhodococcus jostii (strain RHA1).